The primary structure comprises 69 residues: DNA gyrase inhibitor YacG (69 aa).

Zn(2+)-binding residues include Cys14, Cys17, Cys33, and Cys37. The segment at 46–69 (ADEEKSIPGAPDMSDSDGWSEDQY) is disordered. A compositionally biased stretch (acidic residues) spans 59–69 (SDSDGWSEDQY).

This sequence belongs to the DNA gyrase inhibitor YacG family. Interacts with GyrB. The cofactor is Zn(2+).

Its function is as follows. Inhibits all the catalytic activities of DNA gyrase by preventing its interaction with DNA. Acts by binding directly to the C-terminal domain of GyrB, which probably disrupts DNA binding by the gyrase. The polypeptide is DNA gyrase inhibitor YacG (Aliivibrio fischeri (strain MJ11) (Vibrio fischeri)).